A 353-amino-acid chain; its full sequence is MSKGTVALAMSGGVDSSVSAYILKERGYDVIGIYMDLWRDEREEYCNKSAAEDARRVAEKLDIPFHVINIEKKFKDNVIDYFIDEYLSGRTPNPCVACNRTIKFEAFFNAAKEFGADFMATGHYCKIEERNGRKVIVKAEDDKKDQTYMMYNLKQYQLERTIMPCGEYKKDYIREIAENIGLDVYNKKDSQEICFIPDNDHGGFIKRNYKSKVSEGNFVDKKGNIIGKHKGIIYYTIGQRKGLGIALGKPAYVIDINPITNEVVIGDEEDIFRTELIARDVNFIPFDKLEKSMELEAKVRYSAKPSKATIIPLENNKVKVVFQNKQRAITKGQSVVFYDKDMLVGGGIIEEIV.

ATP is bound by residues 9-16 (AMSGGVDS) and methionine 35. The active-site Nucleophile is the cysteine 98. A disulfide bridge connects residues cysteine 98 and cysteine 194. Residue glycine 122 participates in ATP binding. Residues 144–146 (KDQ) form an interaction with tRNA region. Cysteine 194 functions as the Cysteine persulfide intermediate in the catalytic mechanism. Positions 300–301 (RY) are interaction with tRNA.

The protein belongs to the MnmA/TRMU family.

The protein resides in the cytoplasm. It carries out the reaction S-sulfanyl-L-cysteinyl-[protein] + uridine(34) in tRNA + AH2 + ATP = 2-thiouridine(34) in tRNA + L-cysteinyl-[protein] + A + AMP + diphosphate + H(+). Functionally, catalyzes the 2-thiolation of uridine at the wobble position (U34) of tRNA, leading to the formation of s(2)U34. This is tRNA-specific 2-thiouridylase MnmA 1 from Clostridium botulinum (strain Okra / Type B1).